We begin with the raw amino-acid sequence, 496 residues long: Steroid 21-hydroxylase (496 aa).

Residue serine 109 participates in heme b binding. Arginine 232 serves as a coordination point for 17alpha-hydroxyprogesterone. Residue arginine 232 participates in progesterone binding. Heme b is bound by residues histidine 364, arginine 425, and cysteine 427.

The protein belongs to the cytochrome P450 family. Heme b is required as a cofactor.

The protein resides in the endoplasmic reticulum membrane. The protein localises to the microsome membrane. It catalyses the reaction progesterone + reduced [NADPH--hemoprotein reductase] + O2 = 21-hydroxyprogesterone + oxidized [NADPH--hemoprotein reductase] + H2O + H(+). The catalysed reaction is 17alpha-hydroxyprogesterone + reduced [NADPH--hemoprotein reductase] + O2 = 11-deoxycortisol + oxidized [NADPH--hemoprotein reductase] + H2O + H(+). Functionally, a cytochrome P450 monooxygenase that plays a major role in adrenal steroidogenesis. Catalyzes the hydroxylation at C-21 of progesterone and 17alpha-hydroxyprogesterone to respectively form 11-deoxycorticosterone and 11-deoxycortisol, intermediate metabolites in the biosynthetic pathway of mineralocorticoids and glucocorticoids. Mechanistically, uses molecular oxygen inserting one oxygen atom into a substrate, and reducing the second into a water molecule, with two electrons provided by NADPH via cytochrome P450 reductase (CPR; NADPH-ferrihemoprotein reductase). The chain is Steroid 21-hydroxylase (CYP21) from Bos taurus (Bovine).